Here is a 387-residue protein sequence, read N- to C-terminus: L-aspartate:5-guanidino-3-methyl-2-oxopentanoate transaminase (387 aa).

Lys237 is subject to N6-(pyridoxal phosphate)lysine.

This sequence belongs to the class-I pyridoxal-phosphate-dependent aminotransferase family. Pyridoxal 5'-phosphate is required as a cofactor.

It catalyses the reaction (3R)-5-guanidino-3-methyl-2-oxopentanoate + L-aspartate = (3R)-3-methyl-L-arginine + oxaloacetate. It functions in the pathway antibiotic biosynthesis. Functionally, aminotransferase involved in the formation of the rare amino acid 3-methylarginine (MeArg), which is used as a potent antibiotic against the closely related soybean pathogen P.syringae pv. glycinea. Probably catalyzes transamination from the donor L-aspartate to 5-guanidino-3-methyl-2-oxopentanoic acid, generating 3-methylarginine. The protein is L-aspartate:5-guanidino-3-methyl-2-oxopentanoate transaminase of Pseudomonas syringae pv. syringae.